A 204-amino-acid polypeptide reads, in one-letter code: Venom allergen 5 (204 aa).

Disulfide bonds link Cys4-Cys17, Cys8-Cys101, Cys26-Cys94, and Cys170-Cys187. An SCP domain is found at 45 to 189; it reads LKEHNDFRQK…WHKHYLVCNY (145 aa).

It belongs to the CRISP family. Venom allergen 5-like subfamily. As to expression, expressed by the venom gland.

The protein localises to the secreted. In terms of biological role, may have an ancestral function in the promotion of ovum fertilization by sperm. This chain is Venom allergen 5, found in Vespula flavopilosa (Downy yellowjacket).